A 404-amino-acid polypeptide reads, in one-letter code: Argininosuccinate synthase (404 aa).

ATP-binding positions include 10–18 and alanine 38; that span reads AYSGGVDTS. Tyrosine 89 serves as a coordination point for L-citrulline. Glycine 119 contributes to the ATP binding site. The L-aspartate site is built by threonine 121, asparagine 125, and aspartate 126. An L-citrulline-binding site is contributed by asparagine 125. L-citrulline-binding residues include arginine 129, serine 177, serine 186, glutamate 262, and tyrosine 274.

Belongs to the argininosuccinate synthase family. Type 1 subfamily. As to quaternary structure, homotetramer.

The protein localises to the cytoplasm. It catalyses the reaction L-citrulline + L-aspartate + ATP = 2-(N(omega)-L-arginino)succinate + AMP + diphosphate + H(+). It functions in the pathway amino-acid biosynthesis; L-arginine biosynthesis; L-arginine from L-ornithine and carbamoyl phosphate: step 2/3. The polypeptide is Argininosuccinate synthase (Prochlorococcus marinus (strain MIT 9515)).